A 417-amino-acid chain; its full sequence is CinA-like protein (417 aa).

Belongs to the CinA family.

The chain is CinA-like protein from Leptospira biflexa serovar Patoc (strain Patoc 1 / Ames).